Reading from the N-terminus, the 1143-residue chain is AP-3 complex subunit delta (1143 aa).

8 HEAT repeats span residues 129–166 (DLAR…RYPE), 167–203 (SLRP…RNPK), 205–242 (YLPL…HEPR), 245–279 (KKLI…SDHI), 280–317 (PLMK…IHPK), 318–354 (AVSE…KKNI), 356–389 (DIVF…MGTY), and 416–455 (LIAS…PTEG). 5 disordered regions span residues 520–541 (KIPS…DQNE), 634–692 (QEPI…RHPI), 704–728 (KQAN…PENI), 741–792 (HVGA…NDAL), and 829–899 (KKNA…QAAA). Residues 524-540 (LDDDDEEEEAQEEEDQN) show a composition bias toward acidic residues. A coiled-coil region spans residues 526 to 550 (DDDEEEEAQEEEDQNEITHEIVQEC). The span at 653 to 662 (HQKKHHKHHR) shows a compositional bias: basic residues. The segment covering 666–675 (DGDDDEDDET) has biased composition (acidic residues). Residues 814–835 (TDIIKEKEREMAMLAKKNAKLS) adopt a coiled-coil conformation. A compositionally biased stretch (polar residues) spans 840–849 (PSTANYSEVT). 2 stretches are compositionally biased toward low complexity: residues 854-867 (APAK…AAGS) and 881-899 (KPAA…QAAA). The 103-residue stretch at 914–1016 (KTILDDDNFK…FTLLASPSSS (103 aa)) folds into the GAE domain.

It belongs to the adaptor complexes large subunit family. As to quaternary structure, adaptor protein complex 3 (AP-3) is a heterotetramer composed of two large adaptins (delta-type subunit and beta-type subunit), a medium adaptin (mu-type subunit) and a small adaptin (sigma-type subunit).

It localises to the endosome membrane. Functionally, part of the AP-3 complex, an adaptor-related complex which is essential for the compartmentalization of the endocytic pathway. This chain is AP-3 complex subunit delta (ap3d1), found in Dictyostelium discoideum (Social amoeba).